Here is a 246-residue protein sequence, read N- to C-terminus: MEEQDFTAGIFLIDKPVGITSFGVVSRVRRILGMKKVGHAGTLDPFATGLLVVCAGRPATKMISSFMDGEKEYIATLCLGVETETQDPEGAEIARKQVGFLHAETIETCLAGFKGTQMQVPPAYSALKHQGKPLYYYARKGIEVKKDAREITVHEIERLGEGDLEGDHPSLVIRVRCSKGSYIRTLGSDIGKVLGCGAHLTDLRRTKSGFFNVEDALTDVDMLAEDAHERFMKKVLSVESVGKLLQ.

Asp44 serves as the catalytic Nucleophile.

It belongs to the pseudouridine synthase TruB family. Type 1 subfamily.

It carries out the reaction uridine(55) in tRNA = pseudouridine(55) in tRNA. In terms of biological role, responsible for synthesis of pseudouridine from uracil-55 in the psi GC loop of transfer RNAs. This Desulfotalea psychrophila (strain LSv54 / DSM 12343) protein is tRNA pseudouridine synthase B.